Reading from the N-terminus, the 308-residue chain is Homeobox protein abdominal-A homolog (308 aa).

Residues 138–197 (RRRGRQTYTRFQTLELEKEFHFNHYLTRRRRIEIAHALCLTERQIKIWFQNRRMKLKKEL) constitute a DNA-binding region (homeobox). Over residues 207–221 (ARREREEQDKMKNES) the composition is skewed to basic and acidic residues. The interval 207 to 277 (ARREREEQDK…SGNLGSHLHH (71 aa)) is disordered. Residues 223–247 (KSAQQHHSQKQAQQEHTVVGSQQTS) are compositionally biased toward low complexity. The segment covering 248-269 (NGGGTGGGTGGSGGAGSGGSSG) has biased composition (gly residues).

It belongs to the Antp homeobox family.

It localises to the nucleus. Sequence-specific transcription factor which is part of a developmental regulatory system that provides cells with specific positional identities on the anterior-posterior axis. This is Homeobox protein abdominal-A homolog from Anopheles gambiae (African malaria mosquito).